The primary structure comprises 565 residues: uncharacterized protein (565 aa).

13 consecutive transmembrane segments (helical) span residues 8–28, 43–63, 95–115, 137–157, 167–187, 227–247, 268–288, 314–334, 367–387, 424–444, 460–480, 482–502, and 516–536; these read ISFI…GIFF, LAIF…LALI, MTYL…ICSI, WLIW…IPPL, MVVS…GFIV, FTGI…FFAY, WALF…AVAL, IVFG…INGF, VVGV…FTVI, ATWT…GAIV, FLPA…VTII, PFIN…TVLG, and VMLI…VYVE.

The protein to M.pneumoniae MPN_095 and MPN_096.

The protein resides in the cell membrane. This is an uncharacterized protein from Mycoplasma pneumoniae (strain ATCC 29342 / M129 / Subtype 1) (Mycoplasmoides pneumoniae).